Reading from the N-terminus, the 268-residue chain is Glutamate racemase (268 aa).

Substrate-binding positions include 9–10 and 41–42; these read DS and YG. Cysteine 73 acts as the Proton donor/acceptor in catalysis. 74-75 contributes to the substrate binding site; that stretch reads NS. Catalysis depends on cysteine 183, which acts as the Proton donor/acceptor. Residue 184–185 participates in substrate binding; sequence TH.

Belongs to the aspartate/glutamate racemases family.

The catalysed reaction is L-glutamate = D-glutamate. It functions in the pathway cell wall biogenesis; peptidoglycan biosynthesis. Its function is as follows. Provides the (R)-glutamate required for cell wall biosynthesis. The chain is Glutamate racemase from Shewanella piezotolerans (strain WP3 / JCM 13877).